A 48-amino-acid chain; its full sequence is MARYRCCRSRSRCRRRRRRCHRRRRRCSRRRRRRVCCRRYTVIRCRRR.

Belongs to the protamine P1 family. In terms of tissue distribution, testis.

The protein resides in the nucleus. The protein localises to the chromosome. Functionally, protamines substitute for histones in the chromatin of sperm during the haploid phase of spermatogenesis. They compact sperm DNA into a highly condensed, stable and inactive complex. The sequence is that of Sperm protamine P1 (PRM1) from Murina cyclotis (Round-eared tube-nosed bat).